The primary structure comprises 545 residues: Glucose-6-phosphate isomerase (545 aa).

E351 acts as the Proton donor in catalysis. Residues H382 and K510 contribute to the active site.

It belongs to the GPI family.

It localises to the cytoplasm. The catalysed reaction is alpha-D-glucose 6-phosphate = beta-D-fructose 6-phosphate. Its pathway is carbohydrate biosynthesis; gluconeogenesis. The protein operates within carbohydrate degradation; glycolysis; D-glyceraldehyde 3-phosphate and glycerone phosphate from D-glucose: step 2/4. Functionally, catalyzes the reversible isomerization of glucose-6-phosphate to fructose-6-phosphate. This Shewanella baltica (strain OS195) protein is Glucose-6-phosphate isomerase.